The following is a 211-amino-acid chain: 3-demethoxyubiquinol 3-hydroxylase (211 aa).

Fe cation-binding residues include Glu-60, Glu-90, His-93, Glu-142, Glu-174, and His-177.

This sequence belongs to the COQ7 family. Fe cation is required as a cofactor.

The protein resides in the cell membrane. It carries out the reaction a 5-methoxy-2-methyl-3-(all-trans-polyprenyl)benzene-1,4-diol + AH2 + O2 = a 3-demethylubiquinol + A + H2O. The protein operates within cofactor biosynthesis; ubiquinone biosynthesis. In terms of biological role, catalyzes the hydroxylation of 2-nonaprenyl-3-methyl-6-methoxy-1,4-benzoquinol during ubiquinone biosynthesis. This is 3-demethoxyubiquinol 3-hydroxylase from Francisella tularensis subsp. tularensis (strain FSC 198).